Reading from the N-terminus, the 200-residue chain is Somatotropin (200 aa).

A signal peptide spans 1-22; sequence MARVLVVLSVVVASLFFSQGAT. A Zn(2+)-binding site is contributed by His38. Residues Cys71 and Cys173 are joined by a disulfide bond. Glu182 contacts Zn(2+). Cys190 and Cys198 are disulfide-bonded.

Belongs to the somatotropin/prolactin family.

Its subcellular location is the secreted. Its function is as follows. Growth hormone plays an important role in growth control and is involved in the regulation of several anabolic processes. Implicated as an osmoregulatory substance important for seawater adaptation. The chain is Somatotropin (gh) from Pangasianodon gigas (Mekong giant catfish).